The primary structure comprises 464 residues: Hydrogen cyanide synthase subunit HcnB (464 aa).

Heterotrimer of HcnA, HcnB and HcnC.

The protein localises to the cell membrane. The catalysed reaction is glycine + 2 A = hydrogen cyanide + 2 AH2 + CO2. Its activity is regulated as follows. Oxygen is necessary for cyanogenesis. Activated by succinate, glycine methyl ester, glucose and D,L-methionine in addition to glycine. Phenazine methosulfate, methylene blue, 2,6-dichlorophenolindophenol (DCIP) and ferricyanide can replace oxygen for the reaction. Inhibited by pyrrolnitrin and acriflavine at 1 mM concentration. Functionally, a three-component membrane-bound flavoenzyme that catalyzes the formation of hydrogen cyanide, a secondary metabolite, by transfer of electrons to a cyanide-resistant branch of the aerobic respiratory chain. The protein is Hydrogen cyanide synthase subunit HcnB of Pseudomonas aeruginosa (strain ATCC 15692 / DSM 22644 / CIP 104116 / JCM 14847 / LMG 12228 / 1C / PRS 101 / PAO1).